Here is a 145-residue protein sequence, read N- to C-terminus: HTH-type transcriptional regulator MhqR (145 aa).

The HTH marR-type domain occupies S5–L137. Positions L51–Q74 form a DNA-binding region, H-T-H motif.

Functionally, negatively regulates mhqA, mhqED, mhqNOP, and azoR2 which may contribute to the degradation of aromatic compounds. The chain is HTH-type transcriptional regulator MhqR (mhqR) from Bacillus subtilis (strain 168).